Here is a 451-residue protein sequence, read N- to C-terminus: 3-phosphoshikimate 1-carboxyvinyltransferase (451 aa).

The 3-phosphoshikimate site is built by lysine 38, serine 39, and arginine 43. Lysine 38 is a phosphoenolpyruvate binding site. Positions 111 and 140 each coordinate phosphoenolpyruvate. Serine 185, glutamine 187, aspartate 335, and lysine 362 together coordinate 3-phosphoshikimate. Phosphoenolpyruvate is bound at residue glutamine 187. Residue aspartate 335 is the Proton acceptor of the active site. Arginine 366 and arginine 408 together coordinate phosphoenolpyruvate.

It belongs to the EPSP synthase family. As to quaternary structure, monomer.

The protein localises to the cytoplasm. The enzyme catalyses 3-phosphoshikimate + phosphoenolpyruvate = 5-O-(1-carboxyvinyl)-3-phosphoshikimate + phosphate. Its pathway is metabolic intermediate biosynthesis; chorismate biosynthesis; chorismate from D-erythrose 4-phosphate and phosphoenolpyruvate: step 6/7. Its function is as follows. Catalyzes the transfer of the enolpyruvyl moiety of phosphoenolpyruvate (PEP) to the 5-hydroxyl of shikimate-3-phosphate (S3P) to produce enolpyruvyl shikimate-3-phosphate and inorganic phosphate. This is 3-phosphoshikimate 1-carboxyvinyltransferase from Crocosphaera subtropica (strain ATCC 51142 / BH68) (Cyanothece sp. (strain ATCC 51142)).